We begin with the raw amino-acid sequence, 201 residues long: Peroxiredoxin prdx-2 (201 aa).

Residues 10–168 (AFIGKPAPQF…TLRLVQAFQF (159 aa)) enclose the Thioredoxin domain. The active-site Cysteine sulfenic acid (-SOH) intermediate is Cys55.

The protein belongs to the peroxiredoxin family. AhpC/Prx1 subfamily. Monomer and homodimer; disulfide-linked. Under nonstress conditions, present in the reduced monomeric form. Forms active hyperoxidized monomers and disulfide-linked homodimers upon oxidation by hydrogen peroxide. Forms active oxidized homodimers in response to the drug metformin. The enzyme can be inactivated by further oxidation of the cysteine sulfenic acid (C(P)-SOH) to sulphinic acid (C(P)-SO2H) instead of its condensation to a disulfide bond. In terms of tissue distribution, expressed in the gonad, neurons and intestine (at protein level). Expressed in the pharyngeal inter-neuron I4 and the sensory interneuron I2. Expressed in the intestine, pharyngeal muscle 1, vulval muscle, body wall muscle, epithelial cells e1 and e3, and neurons in the head and tail.

Its subcellular location is the cytoplasm. The catalysed reaction is a hydroperoxide + [thioredoxin]-dithiol = an alcohol + [thioredoxin]-disulfide + H2O. With respect to regulation, activated following oxidation of the conserved redox-active cysteine residue, which subsequently allows for the oxidation and activation of substrates. Functionally, thiol-specific peroxidase that catalyzes the reduction of hydrogen peroxide and organic hydroperoxides to water and alcohols, respectively. In I2 pharyngeal neurons, required for the inhibition of feeding in response to light and hydrogen peroxide. In the intestine, plays a role in protecting cells against oxidative stress by detoxifying peroxides such as hydrogen peroxide. In addition, plays a role in the recovery from oxidative stress induced by hydrogen peroxide. In its hyperoxidized form (induced by hydrogen peroxide), confers protection against heat stress. However, has a low tendency for overoxidation during the normal lifespan. Increases sensitivity to cytotoxicity caused by metalloids and heavy metals such as arsenic and cadmium by playing a role in inhibiting the expression of phase II detoxification genes such as gcs-1 in intestinal cells. In addition, in response to arsenite, promotes the secretion of the insulin ligand daf-28 into the pseudocoelom, which negatively regulates the activities of daf-16 and skn-1. Plays a role in promoting longevity. Plays a role in the mitohormetic pathway by promoting the activation of pmk-1 in response to the drug metformin. The chain is Peroxiredoxin prdx-2 from Caenorhabditis elegans.